A 337-amino-acid chain; its full sequence is tRNA-dihydrouridine synthase B (337 aa).

FMN is bound by residues 19–21 (PMA) and Gln73. The active-site Proton donor is the Cys103. FMN-binding positions include Lys142, 203–205 (NGD), and 227–228 (GR).

Belongs to the Dus family. DusB subfamily. Requires FMN as cofactor.

It catalyses the reaction a 5,6-dihydrouridine in tRNA + NAD(+) = a uridine in tRNA + NADH + H(+). It carries out the reaction a 5,6-dihydrouridine in tRNA + NADP(+) = a uridine in tRNA + NADPH + H(+). In terms of biological role, catalyzes the synthesis of 5,6-dihydrouridine (D), a modified base found in the D-loop of most tRNAs, via the reduction of the C5-C6 double bond in target uridines. The protein is tRNA-dihydrouridine synthase B of Pseudomonas putida (strain ATCC 47054 / DSM 6125 / CFBP 8728 / NCIMB 11950 / KT2440).